The following is a 237-amino-acid chain: Putative N-acetylmannosamine-6-phosphate 2-epimerase (237 aa).

The protein belongs to the NanE family.

It carries out the reaction an N-acyl-D-glucosamine 6-phosphate = an N-acyl-D-mannosamine 6-phosphate. It functions in the pathway amino-sugar metabolism; N-acetylneuraminate degradation; D-fructose 6-phosphate from N-acetylneuraminate: step 3/5. In terms of biological role, converts N-acetylmannosamine-6-phosphate (ManNAc-6-P) to N-acetylglucosamine-6-phosphate (GlcNAc-6-P). This is Putative N-acetylmannosamine-6-phosphate 2-epimerase from Listeria monocytogenes serovar 1/2a (strain ATCC BAA-679 / EGD-e).